Consider the following 91-residue polypeptide: Class I hydrophobin E (91 aa).

A signal peptide spans 1-16; the sequence is MKFSIAAIALAAVAVA. Cystine bridges form between Cys-30–Cys-72, Cys-42–Cys-64, Cys-43–Cys-55, and Cys-73–Cys-89. N-linked (GlcNAc...) asparagine glycosylation occurs at Asn-83.

Belongs to the fungal hydrophobin family.

It localises to the secreted. The protein resides in the cell wall. It is found in the vacuole. Its subcellular location is the cytoplasmic vesicle. Aerial growth, conidiation, and dispersal of filamentous fungi in the environment rely upon a capability of their secreting small amphipathic proteins called hydrophobins (HPBs) with low sequence identity. Class I can self-assemble into an outermost layer of rodlet bundles on aerial cell surfaces, conferring cellular hydrophobicity that supports fungal growth, development and dispersal; whereas Class II form highly ordered films at water-air interfaces through intermolecular interactions but contribute nothing to the rodlet structure. Hyd1E contributes to certain cell wall-related features, such as hydrophobicity but is not involved in cell wall-related events during fungal proliferation in host hemocoel. Does not contribute to conidial hydrophobicity. This is Class I hydrophobin E from Beauveria bassiana (strain ARSEF 2860) (White muscardine disease fungus).